The sequence spans 1212 residues: Nucleolar protein 6 (1212 aa).

Disordered stretches follow at residues 1 to 72 (MGKI…PVSI) and 1156 to 1212 (KREQ…KSLS). Residues 1197-1212 (LKRKSLIKSRPLKSLS) show a composition bias toward basic residues.

Belongs to the NRAP family. Part of the small subunit (SSU) processome, composed of more than 70 proteins and the RNA chaperone small nucleolar RNA (snoRNA) U3.

It localises to the nucleus. The protein resides in the nucleolus. The protein localises to the chromosome. Its function is as follows. Part of the small subunit (SSU) processome, first precursor of the small eukaryotic ribosomal subunit. During the assembly of the SSU processome in the nucleolus, many ribosome biogenesis factors, an RNA chaperone and ribosomal proteins associate with the nascent pre-rRNA and work in concert to generate RNA folding, modifications, rearrangements and cleavage as well as targeted degradation of pre-ribosomal RNA by the RNA exosome. The protein is Nucleolar protein 6 of Drosophila pseudoobscura pseudoobscura (Fruit fly).